The following is a 350-amino-acid chain: Solute carrier family 35 member E4 (350 aa).

A compositionally biased stretch (low complexity) spans Gly-19 to Pro-30. A disordered region spans residues Gly-19–Arg-42. The next 8 helical transmembrane spans lie at Met-51 to Phe-71, Val-73 to Ala-93, Val-110 to Pro-132, Leu-135 to Leu-155, Val-218 to Val-238, Ile-258 to Leu-278, Thr-279 to Ser-299, and Tyr-312 to Ala-332. Residues Asn-125 to Ala-179 enclose the EamA domain.

Belongs to the TPT transporter family. SLC35E subfamily.

Its subcellular location is the membrane. In terms of biological role, putative transporter. The sequence is that of Solute carrier family 35 member E4 (SLC35E4) from Homo sapiens (Human).